The primary structure comprises 141 residues: NADH-quinone oxidoreductase subunit A (141 aa).

Helical transmembrane passes span 24-44 (LLAL…LLLA), 77-97 (VPFY…AFIA), and 106-126 (LGWA…VALI).

The protein belongs to the complex I subunit 3 family. In terms of assembly, NDH-1 is composed of 14 different subunits. Subunits NuoA, H, J, K, L, M, N constitute the membrane sector of the complex.

The protein resides in the cell inner membrane. It carries out the reaction a quinone + NADH + 5 H(+)(in) = a quinol + NAD(+) + 4 H(+)(out). Functionally, NDH-1 shuttles electrons from NADH, via FMN and iron-sulfur (Fe-S) centers, to quinones in the respiratory chain. The immediate electron acceptor for the enzyme in this species is believed to be ubiquinone. Couples the redox reaction to proton translocation (for every two electrons transferred, four hydrogen ions are translocated across the cytoplasmic membrane), and thus conserves the redox energy in a proton gradient. The polypeptide is NADH-quinone oxidoreductase subunit A (Syntrophotalea carbinolica (strain DSM 2380 / NBRC 103641 / GraBd1) (Pelobacter carbinolicus)).